The sequence spans 564 residues: Pyruvate decarboxylase (564 aa).

2 residues coordinate pyruvate: D28 and H115. Thiamine diphosphate-binding positions include T390 and 413-415; that span reads GSI. D444 is a Mg(2+) binding site. Residues 445-446 and 471-476 contribute to the thiamine diphosphate site; these read GS and NDGYTI. Mg(2+) contacts are provided by N471 and G473. E477 is a binding site for pyruvate.

The protein belongs to the TPP enzyme family. As to quaternary structure, homotetramer. Mg(2+) is required as a cofactor. The cofactor is thiamine diphosphate.

It catalyses the reaction a 2-oxocarboxylate + H(+) = an aldehyde + CO2. The catalysed reaction is pyruvate + H(+) = acetaldehyde + CO2. In Candida glabrata (strain ATCC 2001 / BCRC 20586 / JCM 3761 / NBRC 0622 / NRRL Y-65 / CBS 138) (Yeast), this protein is Pyruvate decarboxylase (PDC1).